A 208-amino-acid chain; its full sequence is MSETAPAASSTLVPAPVEKPSSKRRGKKPGLAPARKPRGFSVSKLIPEALSTSQERAGMSLAALKKALAAAGYDVEKNNSRIKLALKRLVNKGVLVQTKGTGASGSFKLSKKAASGNDKGKGKKSASAKAKKMGLPRASRSPKSSKTKAVKKPKATPTKASGSGRKTKGAKGVQQRKSPAKARAANPNSGKAKMVMQKTDLRKAAGRK.

Residues 1-12 are compositionally biased toward polar residues; that stretch reads MSETAPAASSTL. The tract at residues 1-39 is disordered; it reads MSETAPAASSTLVPAPVEKPSSKRRGKKPGLAPARKPRG. At serine 9 the chain carries Phosphoserine. In terms of domain architecture, H15 spans 38 to 111; that stretch reads RGFSVSKLIP…GASGSFKLSK (74 aa). Arginine 56 carries the citrulline modification. Residues 95–208 are disordered; that stretch reads LVQTKGTGAS…TDLRKAAGRK (114 aa). The span at 121 to 134 shows a compositional bias: basic residues; it reads KGKKSASAKAKKMG. Serine 141 bears the Phosphoserine mark. The segment covering 143 to 154 has biased composition (basic residues); sequence KSSKTKAVKKPK. Threonine 156 is modified (phosphothreonine). 2 positions are modified to phosphoserine: serine 163 and serine 178. Basic and acidic residues predominate over residues 199–208; the sequence is TDLRKAAGRK.

Belongs to the histone H1/H5 family. Post-translationally, phosphorylated in early spermatids. Citrullination at Arg-56 (H1R54ci) by PADI4 takes place within the DNA-binding site of H1 and results in its displacement from chromatin and global chromatin decondensation, thereby promoting pluripotency and stem cell maintenance. As to expression, testis-specific.

The protein localises to the nucleus. It localises to the chromosome. Testis-specific histone H1 that forms less compacted chromatin compared to other H1 histone subtypes. Formation of more relaxed chromatin may be required to promote chromatin architecture required for proper chromosome regulation during meiosis, such as homologous recombination. Histones H1 act as linkers that bind to nucleosomes and compact polynucleosomes into a higher-order chromatin configuration. This Mus musculus (Mouse) protein is Histone H1t.